Here is a 1112-residue protein sequence, read N- to C-terminus: Mediator of RNA polymerase II transcription subunit 14 (1112 aa).

It belongs to the Mediator complex subunit 14 family. Component of the Mediator complex.

The protein resides in the nucleus. Its function is as follows. Component of the Mediator complex, a coactivator involved in the regulated transcription of nearly all RNA polymerase II-dependent genes. Mediator functions as a bridge to convey information from gene-specific regulatory proteins to the basal RNA polymerase II transcription machinery. Mediator is recruited to promoters by direct interactions with regulatory proteins and serves as a scaffold for the assembly of a functional preinitiation complex with RNA polymerase II and the general transcription factors. This chain is Mediator of RNA polymerase II transcription subunit 14 (RGR1), found in Scheffersomyces stipitis (strain ATCC 58785 / CBS 6054 / NBRC 10063 / NRRL Y-11545) (Yeast).